Consider the following 489-residue polypeptide: Lysine--tRNA ligase (489 aa).

Mg(2+)-binding residues include E399 and E406.

It belongs to the class-II aminoacyl-tRNA synthetase family. As to quaternary structure, homodimer. Mg(2+) is required as a cofactor.

It localises to the cytoplasm. It catalyses the reaction tRNA(Lys) + L-lysine + ATP = L-lysyl-tRNA(Lys) + AMP + diphosphate. The protein is Lysine--tRNA ligase of Roseiflexus sp. (strain RS-1).